Here is a 908-residue protein sequence, read N- to C-terminus: Zinc finger CCCH domain-containing protein 41 (908 aa).

Over residues 1–13 (MELSVSSPKQSVL) the composition is skewed to polar residues. The tract at residues 1–124 (MELSVSSPKQ…GRGNYGSWAQ (124 aa)) is disordered. Over residues 20 to 34 (SDPEEEHEISEEEDD) the composition is skewed to acidic residues. Polar residues-rich tracts occupy residues 48-59 (SQSLEQDSSDQA) and 90-105 (GQRV…SNPM). The segment at 200-228 (GIPRQRCRDFEERGFCLRGDMCPMEHGMN) adopts a C3H1-type zinc-finger fold. The tract at residues 333 to 375 (NVAPLDDSNQDAAENGCGIRDSRSTSQSVWGRMKGSNSQANSK) is disordered. Over residues 356–373 (STSQSVWGRMKGSNSQAN) the composition is skewed to polar residues. The 73-residue stretch at 438 to 510 (RTLFVNYVPH…RFIKLWWANR (73 aa)) folds into the RRM domain. Disordered regions lie at residues 558–590 (PTFQ…LQQK), 629–695 (VVKR…KQRP), and 807–908 (RESN…QIHQ). Positions 559–588 (TFQTGGAPSSSEQPKPVVVTTSGPKVTPLQ) are enriched in polar residues. Residues 587-630 (LQQKKADTLERLKETLRKKQEMLEQKRNEYRKKLATLEKQGTVV) adopt a coiled-coil conformation. Positions 630–647 (VKREEADEPDAKRVKLDT) are enriched in basic and acidic residues. The residue at position 657 (Ser657) is a Phosphoserine. Residues 677 to 688 (AKLSTETPSPDS) are compositionally biased toward polar residues. Residues 807 to 828 (RESNNNNNNSNSLSVSRDNLSS) are compositionally biased toward low complexity. The segment covering 846-863 (KTSSTEEPENTNVSGDND) has biased composition (polar residues). The span at 865 to 886 (TLDKQETKESDNDNNKSNHESI) shows a compositional bias: basic and acidic residues. The span at 898-908 (TDEEQSEQIHQ) shows a compositional bias: acidic residues.

This is Zinc finger CCCH domain-containing protein 41 from Arabidopsis thaliana (Mouse-ear cress).